Here is a 310-residue protein sequence, read N- to C-terminus: Low-salt glycan biosynthesis protein Agl12 (310 aa).

Residues 7 to 13, 32 to 35, and 58 to 59 each bind NAD(+); these read GGAGFIG, DALT, and DI. A substrate-binding site is contributed by S82. Position 97 (T97) interacts with NAD(+). Substrate-binding positions include T122 and 122–124; that span reads TDE. D123 acts as the Proton donor in catalysis. Residues E124 and Y146 each act as proton acceptor in the active site. 146-150 contributes to the NAD(+) binding site; that stretch reads YSATK. Position 175 (N175) interacts with substrate. N176 provides a ligand contact to NAD(+). Substrate is bound by residues 185–186, 201–203, R210, N245, and 269–272; these read KL, PVY, and RAGH.

This sequence belongs to the NAD(P)-dependent epimerase/dehydratase family. dTDP-glucose dehydratase subfamily. NAD(+) serves as cofactor.

It participates in protein modification; protein glycosylation. Its pathway is cell surface structure biogenesis; S-layer biogenesis. Its function is as follows. Lyase involved in N-glycan biosynthetic pathway that takes place under low-salt conditions (1.75 M instead of 3.4 M). Participates in the formation of the tetrasaccharide present at 'Asn-532' of S-layer glycoprotein Csg, consisting of a sulfated hexose, 2 hexoses and rhamnose. Involved in the addition of final rhamnose (sugar 4) of the tetrasaccharide on the dolichol phosphate carrier. This is Low-salt glycan biosynthesis protein Agl12 (agl12) from Haloferax volcanii (strain ATCC 29605 / DSM 3757 / JCM 8879 / NBRC 14742 / NCIMB 2012 / VKM B-1768 / DS2) (Halobacterium volcanii).